The sequence spans 395 residues: Dihydroorotate dehydrogenase (quinone), mitochondrial (395 aa).

Residues 1–10 (MAWRQLKKRA) constitute a mitochondrion; not cleaved transit peptide. Residues 1–10 (MAWRQLKKRA) lie on the Mitochondrial matrix side of the membrane. Residues 11–30 (QDAMVILGGGGLLFASYLTA) traverse the membrane as a helical segment. Residues 31 to 395 (TGDEHFYAEL…TDAIGADHRR (365 aa)) lie on the Mitochondrial intermembrane side of the membrane. Residues 95–99 (AGFDK) and Ser119 contribute to the FMN site. Lys99 contributes to the substrate binding site. 144–148 (NRYGF) contributes to the substrate binding site. The FMN site is built by Asn180 and Asn211. 211–216 (NVSSPN) is a binding site for substrate. Ser214 acts as the Nucleophile in catalysis. FMN is bound by residues Lys254 and Thr282. 283 to 284 (NS) serves as a coordination point for substrate. Residues Gly305, Gly334, and 355–356 (YT) contribute to the FMN site.

The protein belongs to the dihydroorotate dehydrogenase family. Type 2 subfamily. In terms of assembly, monomer. FMN is required as a cofactor. Post-translationally, the uncleaved transit peptide is required for mitochondrial targeting and proper membrane integration.

It localises to the mitochondrion inner membrane. It carries out the reaction (S)-dihydroorotate + a quinone = orotate + a quinol. The protein operates within pyrimidine metabolism; UMP biosynthesis via de novo pathway; orotate from (S)-dihydroorotate (quinone route): step 1/1. Catalyzes the conversion of dihydroorotate to orotate with quinone as electron acceptor. Required for UMP biosynthesis via de novo pathway. The protein is Dihydroorotate dehydrogenase (quinone), mitochondrial (DHODH) of Bos taurus (Bovine).